The chain runs to 254 residues: Agamous-like MADS-box protein AGL9 homolog (254 aa).

The 55-residue stretch at 3–57 folds into the MADS-box domain; the sequence is RGRVELKRIENKINRQVTFAKRRNGLLKKAYELSVLCDAEVALIIFSNRGKLYEF. Residues 91–181 form the K-box domain; sequence ELSSQQEYLK…RLRLADGYQM (91 aa).

The protein localises to the nucleus. Probable transcription factor active in inflorescence development and floral organogenesis. This chain is Agamous-like MADS-box protein AGL9 homolog (AGL9), found in Sinapis alba (White mustard).